The chain runs to 638 residues: Cell division control protein 45 homolog (638 aa).

A disordered region spans residues 151–204; that stretch reads ELSDEENSDSSNEREEEVEDDNRSVESYSSSDYQARSRRRFSEETTQRRAEIKE. The segment covering 153-170 has biased composition (acidic residues); it reads SDEENSDSSNEREEEVED. The segment covering 190–204 has biased composition (basic and acidic residues); the sequence is RFSEETTQRRAEIKE.

It belongs to the CDC45 family. Interacts with sld3.

It localises to the nucleus. In terms of biological role, required for initiation of chromosomal DNA replication. May have a role in regulating the MCM proteins nda1 and nda4. The sequence is that of Cell division control protein 45 homolog (sna41) from Schizosaccharomyces pombe (strain 972 / ATCC 24843) (Fission yeast).